Reading from the N-terminus, the 358-residue chain is Ribosomal RNA large subunit methyltransferase M (358 aa).

S-adenosyl-L-methionine contacts are provided by residues Ser-191, 224-227 (APGG), Asp-243, Asp-263, and Asp-279. The active-site Proton acceptor is the Lys-308.

The protein belongs to the class I-like SAM-binding methyltransferase superfamily. RNA methyltransferase RlmE family. RlmM subfamily. In terms of assembly, monomer.

It is found in the cytoplasm. It catalyses the reaction cytidine(2498) in 23S rRNA + S-adenosyl-L-methionine = 2'-O-methylcytidine(2498) in 23S rRNA + S-adenosyl-L-homocysteine + H(+). Catalyzes the 2'-O-methylation at nucleotide C2498 in 23S rRNA. The polypeptide is Ribosomal RNA large subunit methyltransferase M (Marinobacter nauticus (strain ATCC 700491 / DSM 11845 / VT8) (Marinobacter aquaeolei)).